Reading from the N-terminus, the 317-residue chain is Transaldolase (317 aa).

Lysine 132 functions as the Schiff-base intermediate with substrate in the catalytic mechanism.

The protein belongs to the transaldolase family. Type 1 subfamily. Homodimer.

It localises to the cytoplasm. The enzyme catalyses D-sedoheptulose 7-phosphate + D-glyceraldehyde 3-phosphate = D-erythrose 4-phosphate + beta-D-fructose 6-phosphate. It participates in carbohydrate degradation; pentose phosphate pathway; D-glyceraldehyde 3-phosphate and beta-D-fructose 6-phosphate from D-ribose 5-phosphate and D-xylulose 5-phosphate (non-oxidative stage): step 2/3. Functionally, transaldolase is important for the balance of metabolites in the pentose-phosphate pathway. This is Transaldolase (talB) from Escherichia coli O104:H4 (strain 2009EL-2071).